A 595-amino-acid chain; its full sequence is DNA mismatch repair protein MutL (595 aa).

It belongs to the DNA mismatch repair MutL/HexB family.

This protein is involved in the repair of mismatches in DNA. It is required for dam-dependent methyl-directed DNA mismatch repair. May act as a 'molecular matchmaker', a protein that promotes the formation of a stable complex between two or more DNA-binding proteins in an ATP-dependent manner without itself being part of a final effector complex. This Rhodopseudomonas palustris (strain ATCC BAA-98 / CGA009) protein is DNA mismatch repair protein MutL.